The following is a 422-amino-acid chain: 5-hydroxytryptamine receptor 1A (422 aa).

Residues M1–G23 form a disordered region. At M1–I38 the chain is on the extracellular side. Residues N10, N11, and N24 are each glycosylated (N-linked (GlcNAc...) asparagine). Residues T39 to A59 traverse the membrane as a helical segment. Residues A60–Y73 lie on the Cytoplasmic side of the membrane. The chain crosses the membrane as a helical span at residues L74–V98. The Extracellular segment spans residues L99–V107. Residues T108–L132 form a helical membrane-spanning segment. C109 and C187 are disulfide-bonded. D116 and C120 together coordinate serotonin. Positions D133 to Y135 match the DRY motif; important for ligand-induced conformation changes motif. Residues D133–R152 are Cytoplasmic-facing. The chain crosses the membrane as a helical span at residues A153–G174. Residues W175–H193 are Extracellular-facing. A helical transmembrane segment spans residues G194 to G216. The Cytoplasmic segment spans residues R217–T346. The interval K235–N262 is disordered. Residues T314, K345, T346, and G352 each coordinate 1D-myo-inositol 4-phosphate. Residues L347–F370 form a helical membrane-spanning segment. The Extracellular segment spans residues C371–P378. A helical membrane pass occupies residues T379–F403. An NPxxY motif; important for ligand-induced conformation changes and signaling motif is present at residues N396 to Y400. Positions 403, 404, and 405 each coordinate 1D-myo-inositol 4-phosphate. Residues N404–Q422 are Cytoplasmic-facing.

It belongs to the G-protein coupled receptor 1 family. 5-hydroxytryptamine receptor subfamily. HTR1A sub-subfamily. Heterodimer; heterodimerizes with GPER1. Interacts with YIF1B. Interacts with GPR39 and GALR1.

The protein localises to the cell membrane. The protein resides in the cell projection. Its subcellular location is the dendrite. Its activity is regulated as follows. G-protein coupled receptor activity is regulated by lipids: phosphatidylinositol 4-phosphate increases HTR1A-mediated activity. Its function is as follows. G-protein coupled receptor for 5-hydroxytryptamine (serotonin). Also functions as a receptor for various drugs and psychoactive substances. Ligand binding causes a conformation change that triggers signaling via guanine nucleotide-binding proteins (G proteins) and modulates the activity of downstream effectors, such as adenylate cyclase. HTR1A is coupled to G(i)/G(o) G alpha proteins and mediates inhibitory neurotransmission: signaling inhibits adenylate cyclase activity and activates a phosphatidylinositol-calcium second messenger system that regulates the release of Ca(2+) ions from intracellular stores. Beta-arrestin family members regulate signaling by mediating both receptor desensitization and resensitization processes. The polypeptide is 5-hydroxytryptamine receptor 1A (HTR1A) (Gorilla gorilla gorilla (Western lowland gorilla)).